The chain runs to 502 residues: Arginine decarboxylase (502 aa).

N6-(pyridoxal phosphate)lysine is present on Lys-42. Residue 226–236 (IDIGGGLGIDY) participates in substrate binding.

The protein belongs to the Orn/Lys/Arg decarboxylase class-II family. SpeA subfamily. Pyridoxal 5'-phosphate is required as a cofactor. Mg(2+) serves as cofactor.

It catalyses the reaction L-arginine + H(+) = agmatine + CO2. It participates in amine and polyamine biosynthesis; agmatine biosynthesis; agmatine from L-arginine: step 1/1. This Solanum lycopersicum (Tomato) protein is Arginine decarboxylase.